A 369-amino-acid polypeptide reads, in one-letter code: Protein V (369 aa).

2 disordered regions span residues 1 to 23 (MDQD…GGRE) and 54 to 320 (INTL…GHRR). Basic and acidic residues-rich tracts occupy residues 7 to 20 (ISKE…EASG), 99 to 110 (AEAHARNVDKQN), 150 to 168 (GAED…RGED), and 175 to 193 (EEIR…RADN). Phosphoserine; by host is present on residues Ser249, Ser257, and Ser260. Residues His318, Cys337, Cys341, Cys353, Cys355, Cys358, Cys362, and Cys365 each coordinate Zn(2+).

It belongs to the paramyxoviruses V protein family. Interacts with host IFIH1/MDA5 and DHX58/LGP2. Interacts with host IRF3. Interacts with host RIGI regulatory protein (via CARDs domain) and host TRIM25 (via SPRY domain); these interactions prevent TRIM25-mediated ubiquitination of RIG-I and disrupts downstream RIG-I signaling.

The protein resides in the host cytoplasm. Functionally, plays an essential role in the inhibition of host immune response. Prevents the establishment of cellular antiviral state by blocking interferon-alpha/beta (IFN-alpha/beta) production and signaling pathway. Interacts with host IFIH1/MDA5 and DHX58/LGP2 to inhibit the transduction pathway involved in the activation of IFN-beta promoter, thus protecting the virus against cell antiviral state. Also interacts with and inhibits host IRF3. Blocks the type I interferon signaling pathway by disrupting the RIG-I signaling pathway. The chain is Protein V (P/V/C) from Cavia cutleri (Guinea pig).